Reading from the N-terminus, the 439-residue chain is Chromosomal replication initiator protein DnaA (439 aa).

The segment at 1 to 72 (MEQFSAFKLL…SKLYDDIRAV (72 aa)) is domain I, interacts with DnaA modulators. The interval 72–99 (VRFVNEQDFFINLAKLEEDNRETLYQSS) is domain II. The segment at 100–322 (GLSKNFTFKN…GIATKLLFYV (223 aa)) is domain III, AAA+ region. Residues G144, G146, K147, and T148 each contribute to the ATP site. The domain IV, binds dsDNA stretch occupies residues 323 to 439 (KTTKQNLINN…LQDIITSLVI (117 aa)).

Belongs to the DnaA family. Oligomerizes as a right-handed, spiral filament on DNA at oriC.

The protein localises to the cytoplasm. Plays an essential role in the initiation and regulation of chromosomal replication. ATP-DnaA binds to the origin of replication (oriC) to initiate formation of the DNA replication initiation complex once per cell cycle. Binds the DnaA box (a 9 base pair repeat at the origin) and separates the double-stranded (ds)DNA. Forms a right-handed helical filament on oriC DNA; dsDNA binds to the exterior of the filament while single-stranded (ss)DNA is stabiized in the filament's interior. The ATP-DnaA-oriC complex binds and stabilizes one strand of the AT-rich DNA unwinding element (DUE), permitting loading of DNA polymerase. After initiation quickly degrades to an ADP-DnaA complex that is not apt for DNA replication. Binds acidic phospholipids. The chain is Chromosomal replication initiator protein DnaA from Mycoplasma pneumoniae (strain ATCC 29342 / M129 / Subtype 1) (Mycoplasmoides pneumoniae).